The primary structure comprises 235 residues: tRNA (guanine-N(1)-)-methyltransferase (235 aa).

S-adenosyl-L-methionine is bound by residues G112 and L131 to L136.

The protein belongs to the RNA methyltransferase TrmD family. As to quaternary structure, homodimer.

Its subcellular location is the cytoplasm. The catalysed reaction is guanosine(37) in tRNA + S-adenosyl-L-methionine = N(1)-methylguanosine(37) in tRNA + S-adenosyl-L-homocysteine + H(+). In terms of biological role, specifically methylates guanosine-37 in various tRNAs. The chain is tRNA (guanine-N(1)-)-methyltransferase from Synechococcus elongatus (strain ATCC 33912 / PCC 7942 / FACHB-805) (Anacystis nidulans R2).